Reading from the N-terminus, the 172-residue chain is Peptide deformylase (172 aa).

2 residues coordinate Fe cation: Cys-92 and His-134. Glu-135 is an active-site residue. His-138 provides a ligand contact to Fe cation.

This sequence belongs to the polypeptide deformylase family. Fe(2+) serves as cofactor.

The enzyme catalyses N-terminal N-formyl-L-methionyl-[peptide] + H2O = N-terminal L-methionyl-[peptide] + formate. Functionally, removes the formyl group from the N-terminal Met of newly synthesized proteins. Requires at least a dipeptide for an efficient rate of reaction. N-terminal L-methionine is a prerequisite for activity but the enzyme has broad specificity at other positions. In Saccharophagus degradans (strain 2-40 / ATCC 43961 / DSM 17024), this protein is Peptide deformylase.